The chain runs to 377 residues: SH2/SH3 adapter protein NCK1 (377 aa).

Ala-2 is subject to N-acetylalanine. In terms of domain architecture, SH3 1 spans 2 to 61 (AEEVVVVAKFDYVAQQEQELDIKKNERLWLLDDSKSWWRVRNSMNKTGFVPSNYVERKNS). Phosphoserine is present on residues Ser-85, Ser-89, Ser-91, and Ser-96. Tyr-105 carries the post-translational modification Phosphotyrosine. Residues 106–165 (DLNMPAYVKFNYMAEREDELSLIKGTKVIVMEKCSDGWWRGSYNGQVGWFPSNYVTEEGD) form the SH3 2 domain. Residue Ser-166 is modified to Phosphoserine. The 63-residue stretch at 190–252 (QVLHVVQALY…PKNYVTVMQN (63 aa)) folds into the SH3 3 domain. The SH2 domain occupies 282 to 376 (WYYGKVTRHQ…GEKLYLVKHL (95 aa)).

As to quaternary structure, interacts (via SH2 domain and SH3 domain 2) with EGFR. Interacts with PAK1 and SOS1. Interacts (via SH3 domains) with PKN2. Associates with BLNK, PLCG1, VAV1 and NCK1 in a B-cell antigen receptor-dependent fashion. Interacts with SOCS7. This interaction is required for nuclear import. Part of a complex containing PPP1R15B, PP1 and NCK1. Interacts with RALGPS1. Interacts with CAV2 (tyrosine phosphorylated form). Interacts with ADAM15. Interacts with FASLG. Directly interacts with RASA1. Interacts with isoform 4 of MINK1. Interacts with FLT1 (tyrosine phosphorylated). Interacts with KDR (tyrosine phosphorylated). Interacts (via SH2 domain) with EPHB1; activates the JUN cascade to regulate cell adhesion. Interacts with EPHA2. Interacts (via SH2 domain) with PDGFRB (tyrosine phosphorylated). Interacts with the inactive form of EIF2AK2/PKR. Interacts with PTPN1. Interacts with INSR/insulin receptor (in response to insulin stimulation); This interaction may mediate PTPN1 recruitment leading to INSR dephosphorylation. Interacts with IRS1. Post-translationally, phosphorylated on Ser and Tyr residues. Phosphorylated in response to activation of EGFR and FcERI. Phosphorylated by activated PDGFRB.

It localises to the cytoplasm. Its subcellular location is the endoplasmic reticulum. The protein localises to the nucleus. In terms of biological role, adapter protein which associates with tyrosine-phosphorylated growth factor receptors, such as KDR and PDGFRB, or their cellular substrates. Maintains low levels of EIF2S1 phosphorylation by promoting its dephosphorylation by PP1. Plays a role in the DNA damage response, not in the detection of the damage by ATM/ATR, but for efficient activation of downstream effectors, such as that of CHEK2. Plays a role in ELK1-dependent transcriptional activation in response to activated Ras signaling. Modulates the activation of EIF2AK2/PKR by dsRNA. May play a role in cell adhesion and migration through interaction with ephrin receptors. In Homo sapiens (Human), this protein is SH2/SH3 adapter protein NCK1 (NCK1).